The sequence spans 776 residues: Probable E3 ubiquitin-protein ligase HECTD2 (776 aa).

A disordered region spans residues Met1–Ala46. Over residues Val7–Ala20 the composition is skewed to low complexity. Ser9 bears the Phosphoserine mark. The span at Pro21–Leu34 shows a compositional bias: basic and acidic residues. Residues Lys437–Glu776 form the HECT domain. Cys744 functions as the Glycyl thioester intermediate in the catalytic mechanism.

It catalyses the reaction S-ubiquitinyl-[E2 ubiquitin-conjugating enzyme]-L-cysteine + [acceptor protein]-L-lysine = [E2 ubiquitin-conjugating enzyme]-L-cysteine + N(6)-ubiquitinyl-[acceptor protein]-L-lysine.. Its pathway is protein modification; protein ubiquitination. Its function is as follows. E3 ubiquitin-protein ligase which accepts ubiquitin from an E2 ubiquitin-conjugating enzyme in the form of a thioester and then directly transfers the ubiquitin to targeted substrates. (Microbial infection) Catalyzes ubiquitination of Botulinum neurotoxin A light chain (LC) of C.botulinum neurotoxin type A (BoNT/A). The polypeptide is Probable E3 ubiquitin-protein ligase HECTD2 (Homo sapiens (Human)).